Consider the following 106-residue polypeptide: uncharacterized protein (106 aa).

It belongs to the HesB/IscA family.

This is an uncharacterized protein from Cereibacter sphaeroides (Rhodobacter sphaeroides).